The chain runs to 290 residues: Taxis protein CheF1 (290 aa).

As to quaternary structure, interacts with chemotaxis (Che) proteins as well as flagella accessory (Fla) proteins.

In terms of biological role, involved in taxis signal transduction. Essential for the ability to control the direction of flagellar rotation. May have a role between CheY and the flagellum. This Halobacterium salinarum (strain ATCC 29341 / DSM 671 / R1) protein is Taxis protein CheF1 (cheF1).